A 384-amino-acid polypeptide reads, in one-letter code: Cell adhesion molecule CEACAM18 (384 aa).

An N-terminal signal peptide occupies residues 1–30 (MDLSRPRWSLWRRVFLMASLLACGICQASG). N-linked (GlcNAc...) asparagine glycosylation is found at N108, N112, N121, N162, and N270. In terms of domain architecture, Ig-like C2-type spans 227 to 314 (PDYVLLRSNP…LIMYMDVRIQ (88 aa)). A disulfide bond links C255 and C296. A disordered region spans residues 358 to 384 (QPLLNQDKSGSMSVHPRPEDKTRRASR). Residues 359–369 (PLLNQDKSGSM) show a composition bias toward polar residues. Residues 373-384 (PRPEDKTRRASR) are compositionally biased toward basic and acidic residues.

This sequence belongs to the immunoglobulin superfamily. CEA family.

This chain is Cell adhesion molecule CEACAM18, found in Homo sapiens (Human).